The chain runs to 254 residues: 5'-nucleotidase SurE (254 aa).

Asp-8, Asp-9, Ser-40, and Asn-93 together coordinate a divalent metal cation.

This sequence belongs to the SurE nucleotidase family. It depends on a divalent metal cation as a cofactor.

It localises to the cytoplasm. It catalyses the reaction a ribonucleoside 5'-phosphate + H2O = a ribonucleoside + phosphate. Nucleotidase that shows phosphatase activity on nucleoside 5'-monophosphates. The protein is 5'-nucleotidase SurE of Rhizorhabdus wittichii (strain DSM 6014 / CCUG 31198 / JCM 15750 / NBRC 105917 / EY 4224 / RW1) (Sphingomonas wittichii).